Consider the following 69-residue polypeptide: DNA gyrase inhibitor YacG (69 aa).

Zn(2+)-binding residues include C14, C17, C33, and C37.

It belongs to the DNA gyrase inhibitor YacG family. In terms of assembly, interacts with GyrB. Zn(2+) is required as a cofactor.

Functionally, inhibits all the catalytic activities of DNA gyrase by preventing its interaction with DNA. Acts by binding directly to the C-terminal domain of GyrB, which probably disrupts DNA binding by the gyrase. The sequence is that of DNA gyrase inhibitor YacG from Aliivibrio salmonicida (strain LFI1238) (Vibrio salmonicida (strain LFI1238)).